Reading from the N-terminus, the 483-residue chain is Prenyltransferase vrtC (483 aa).

This sequence belongs to the tryptophan dimethylallyltransferase family.

Its pathway is secondary metabolite biosynthesis; terpenoid biosynthesis. Its function is as follows. Prenyltransferase; part of the gene cluster that mediates the biosynthesis of viridicatumtoxin, a tetracycline-like fungal meroterpenoid with a unique, fused spirobicyclic ring system. The first step of the pathway is the production of the malonamoyl-CoA starter unit for the polyketide synthase vrtA. The aldolase vrtJ may be involved in the synthesis of the malonamate substrate for malonamoyl-CoA synthetase vrtB. The polyketide synthase vrtA then may utilize the malonamoyl-CoA starter unit, followed by sequential condensation of eight malonyl-CoA units to form the polyketide backbone. The cyclization of the last ring could be mediated by the lactamase-like protein vrtG. The proposed post-PKS tailoring steps are a hydroxylation at C5 catalyzed the cytochrome P450 monooxygenase vrtE, a hydroxylation at C12a catalyzed by VrtH and/or VrtI, and an O-methylation by the O-methyltransferase vrtF. VrtC is then proposed to catalyze the transfer of a geranyl group synthesized by vrtD to the aromatic C ring of the tetracyclic polyketide intermediate of viridicatumtoxin to yield previridicatumtoxin. Finally, the cytochrome P450 monooxygenase vrtK catalyzes the spirocyclization of the geranyl moiety of previridicatumtoxin to afford viridicatumtoxin. The protein is Prenyltransferase vrtC of Penicillium aethiopicum.